The primary structure comprises 543 residues: Hydroxylamine reductase (543 aa).

The [4Fe-4S] cluster site is built by cysteine 3, cysteine 6, cysteine 15, and cysteine 21. Residues histidine 244, glutamate 268, cysteine 312, cysteine 399, cysteine 427, cysteine 452, glutamate 486, and lysine 488 each coordinate hybrid [4Fe-2O-2S] cluster. Position 399 is a cysteine persulfide (cysteine 399).

It belongs to the HCP family. Requires [4Fe-4S] cluster as cofactor. Hybrid [4Fe-2O-2S] cluster is required as a cofactor.

It localises to the cytoplasm. The enzyme catalyses A + NH4(+) + H2O = hydroxylamine + AH2 + H(+). Functionally, catalyzes the reduction of hydroxylamine to form NH(3) and H(2)O. The chain is Hydroxylamine reductase from Methanocella arvoryzae (strain DSM 22066 / NBRC 105507 / MRE50).